Here is a 499-residue protein sequence, read N- to C-terminus: MATSKAPKERLKNYKYRGKEMSLPRQQRIASSLQLRKTRKDEQVLKRRNIDLFSSDMVSQALVKEVNFTLDDIIQAVNSSDPILHFRATRAAREMISQENTPPLNLIIEAGLIPKLVDFLKATPHPKLQFEAAWVLTNIASGTSEQTRAVVKEGAIQPLIELLCSPHLTVSEQAVWALGNIAGDCAEFRDCVISNNAIPHLINLISKGIPITFLRNISWTLSNLCRNKDPYPSESAVRQMLPPLCQLLLHRDNEILADTCWALSYLTKGGKEYIHHVVTTGILPRLVELMTSSELSISIPCLHTIGNIVAGTDEQTQMAIDAGMLKVLGQVLKHPKTSIQVLAAWTMSNVAAGPRHQVEQLLCNLLPILVDLLRNAELKVQKEVVCTVINIATGASQDQLTLLAHSGILEPMLSLLSAPDLEVVIIVLDIISYLLQHIDNLQEKKRLYFQIEKFGGFEKIECLQHHHNISISNSALDIIEKYFCEDGDGDSLPGPGLRV.

The IBB domain occupies 1–57; it reads MATSKAPKERLKNYKYRGKEMSLPRQQRIASSLQLRKTRKDEQVLKRRNIDLFSSDM. 8 ARM repeats span residues 101–141, 144–183, 186–226, 229–268, 271–310, 313–352, 354–393, and 397–436; these read TPPL…NIAS, SEQT…NIAG, AEFR…NLCR, DPYP…YLTK, KEYI…NIVA, DEQT…NVAA, PRHQ…NIAT, and QDQL…YLLQ.

The protein belongs to the importin alpha family. In terms of assembly, binds to importin subunit beta-1/KPNB1 via the IBB domain; this complex dissociates in the presence of RAN-GTP. Shows a limited binding to the RB1 nuclear localization signal (NLS), but not to the SV40, nor NPM1 NLSs. Interacts with RSL1D1. In terms of tissue distribution, expressed predominantly in ovary. Isoform 1 is the predominant form.

The protein resides in the nucleus. Its function is as follows. Functions in nuclear protein import. This chain is Importin subunit alpha-8 (Kpna7), found in Mus musculus (Mouse).